The chain runs to 449 residues: Pectate lyase L (449 aa).

The N-terminal stretch at 1 to 26 (MFKRNDRSKNGFNALRLGVSFVLASS) is a signal peptide. Cys27 carries N-palmitoyl cysteine lipidation. The S-diacylglycerol cysteine moiety is linked to residue Cys27. PbH1 repeat units lie at residues 158-179 (GDFW…IYIG), 180-202 (GSNN…QLGR), 213-242 (PANN…AAKL), 245-267 (GSGN…DLYS), 274-308 (IGAV…KLGG), 336-358 (PGTI…AFDK), and 359-391 (GEHV…WWKN). Ca(2+) contacts are provided by Asp236, Asp260, Asp261, and Asp264. The active-site Proton acceptor is the Lys305.

Belongs to the polysaccharide lyase 9 family. Requires Ca(2+) as cofactor.

The protein localises to the secreted. The catalysed reaction is Eliminative cleavage of (1-&gt;4)-alpha-D-galacturonan to give oligosaccharides with 4-deoxy-alpha-D-galact-4-enuronosyl groups at their non-reducing ends.. Activated in presence of the surfactant polysorbate 20, while inhibited in the presence of polysorbate 40, polysorbate 60, polysorbate 80, Triton X-100 and sodium dodecyl sulfate. Inhibited by the metal chelator ethylenediaminetetraacetic acid (EDTA). Inhibited by iron and cobalt ions. Its function is as follows. Presents an endo-cleaving activity on the homogalacturonan (HG) region in pectin with a preference for low- or unmethylated pectin. This is Pectate lyase L from Paenibacillus polymyxa (strain SC2) (Bacillus polymyxa).